A 291-amino-acid polypeptide reads, in one-letter code: tRNA U34 carboxymethyltransferase (291 aa).

Residues K61, W75, K80, G100, 122–124, Y169, and R284 contribute to the carboxy-S-adenosyl-L-methionine site; that span reads DPS.

Belongs to the class I-like SAM-binding methyltransferase superfamily. CmoB family. Homotetramer.

The catalysed reaction is carboxy-S-adenosyl-L-methionine + 5-hydroxyuridine(34) in tRNA = 5-carboxymethoxyuridine(34) in tRNA + S-adenosyl-L-homocysteine + H(+). Functionally, catalyzes carboxymethyl transfer from carboxy-S-adenosyl-L-methionine (Cx-SAM) to 5-hydroxyuridine (ho5U) to form 5-carboxymethoxyuridine (cmo5U) at position 34 in tRNAs. The chain is tRNA U34 carboxymethyltransferase from Campylobacter lari (strain RM2100 / D67 / ATCC BAA-1060).